Consider the following 332-residue polypeptide: Anthranilate phosphoribosyltransferase (332 aa).

Residues Gly-79, 82–83 (GD), Thr-87, 89–92 (NIST), 107–115 (KHGNRSVSS), and Ser-119 each bind 5-phospho-alpha-D-ribose 1-diphosphate. An anthranilate-binding site is contributed by Gly-79. Ser-91 serves as a coordination point for Mg(2+). Residue Asn-110 participates in anthranilate binding. Position 165 (Arg-165) interacts with anthranilate. Mg(2+) contacts are provided by Asp-223 and Glu-224.

Belongs to the anthranilate phosphoribosyltransferase family. In terms of assembly, homodimer. Requires Mg(2+) as cofactor.

It carries out the reaction N-(5-phospho-beta-D-ribosyl)anthranilate + diphosphate = 5-phospho-alpha-D-ribose 1-diphosphate + anthranilate. It participates in amino-acid biosynthesis; L-tryptophan biosynthesis; L-tryptophan from chorismate: step 2/5. Its function is as follows. Catalyzes the transfer of the phosphoribosyl group of 5-phosphorylribose-1-pyrophosphate (PRPP) to anthranilate to yield N-(5'-phosphoribosyl)-anthranilate (PRA). The polypeptide is Anthranilate phosphoribosyltransferase (Vibrio parahaemolyticus serotype O3:K6 (strain RIMD 2210633)).